We begin with the raw amino-acid sequence, 339 residues long: Biotin synthase (339 aa).

One can recognise a Radical SAM core domain in the interval 55–282 (NAVQLSTLLS…KAVVRLSAGR (228 aa)). Residues C70, C74, and C77 each coordinate [4Fe-4S] cluster. Residues C114, C145, C205, and R277 each contribute to the [2Fe-2S] cluster site.

It belongs to the radical SAM superfamily. Biotin synthase family. As to quaternary structure, homodimer. The cofactor is [4Fe-4S] cluster. [2Fe-2S] cluster is required as a cofactor.

It carries out the reaction (4R,5S)-dethiobiotin + (sulfur carrier)-SH + 2 reduced [2Fe-2S]-[ferredoxin] + 2 S-adenosyl-L-methionine = (sulfur carrier)-H + biotin + 2 5'-deoxyadenosine + 2 L-methionine + 2 oxidized [2Fe-2S]-[ferredoxin]. It participates in cofactor biosynthesis; biotin biosynthesis; biotin from 7,8-diaminononanoate: step 2/2. Functionally, catalyzes the conversion of dethiobiotin (DTB) to biotin by the insertion of a sulfur atom into dethiobiotin via a radical-based mechanism. The sequence is that of Biotin synthase from Burkholderia cenocepacia (strain ATCC BAA-245 / DSM 16553 / LMG 16656 / NCTC 13227 / J2315 / CF5610) (Burkholderia cepacia (strain J2315)).